Reading from the N-terminus, the 217-residue chain is Ribose-5-phosphate isomerase A (217 aa).

Substrate contacts are provided by residues 28–31 (TGST), 81–84 (DGAD), and 94–97 (KGGG). Glu103 functions as the Proton acceptor in the catalytic mechanism. Lys121 contacts substrate.

The protein belongs to the ribose 5-phosphate isomerase family. As to quaternary structure, homodimer.

It catalyses the reaction aldehydo-D-ribose 5-phosphate = D-ribulose 5-phosphate. The protein operates within carbohydrate degradation; pentose phosphate pathway; D-ribose 5-phosphate from D-ribulose 5-phosphate (non-oxidative stage): step 1/1. Its function is as follows. Catalyzes the reversible conversion of ribose-5-phosphate to ribulose 5-phosphate. The protein is Ribose-5-phosphate isomerase A of Aeromonas hydrophila subsp. hydrophila (strain ATCC 7966 / DSM 30187 / BCRC 13018 / CCUG 14551 / JCM 1027 / KCTC 2358 / NCIMB 9240 / NCTC 8049).